Reading from the N-terminus, the 40-residue chain is Plasma membrane ATPase proteolipid 1 (40 aa).

A propeptide spanning residues 1–2 is cleaved from the precursor; that stretch reads MT. Residues 3 to 26 form a helical membrane-spanning segment; that stretch reads LPGGVILVFILVGLACIAIIATII. Over 27–40 the chain is Cytoplasmic; that stretch reads YRKWQARQRGLQRF.

In terms of assembly, monomer and homodimer. Associated with the 100 kDa subunit of the plasma membrane H(+)-ATPase.

Its subcellular location is the cell membrane. In Saccharomyces cerevisiae (strain ATCC 204508 / S288c) (Baker's yeast), this protein is Plasma membrane ATPase proteolipid 1 (PMP1).